Here is a 141-residue protein sequence, read N- to C-terminus: MKWLLGAYVCLCLANILNALIPNPCCNVFALNETLIPSIYDINWIYITDPQTCKGVSVAQVFQRRTAQHMSTRYVCSNGFNVISFLLAVLRKLPLNTEEYNFKNRLITLQNSFLSKLGPDTTSAIKFKSKYGQLAKTRNLE.

The first 19 residues, 1–19 (MKWLLGAYVCLCLANILNA), serve as a signal peptide directing secretion. Residues 21–131 (IPNPCCNVFA…TSAIKFKSKY (111 aa)) are interaction with gH.

This sequence belongs to the herpesviridae glycoprotein L family. In terms of assembly, interacts with glycoprotein H (gH); this interaction is necessary for the correct processing and cell surface expression of gH. The heterodimer gH/gL seems to interact with gB trimers during fusion.

It is found in the virion membrane. The protein localises to the host cell membrane. The protein resides in the host Golgi apparatus. Its subcellular location is the host trans-Golgi network. The heterodimer glycoprotein H-glycoprotein L is required for the fusion of viral and plasma membranes leading to virus entry into the host cell. Acts as a functional inhibitor of gH and maintains gH in an inhibited form. Upon binding to host integrins, gL dissociates from gH leading to activation of the viral fusion glycoproteins gB and gH. This is Envelope glycoprotein L from Saimiriine herpesvirus 2 (strain 11) (SaHV-2).